We begin with the raw amino-acid sequence, 381 residues long: DNA dC-&gt;dU-editing enzyme APOBEC-3G (381 aa).

Residues 1 to 62 (MKPQTRNTVV…ANIFQGQVSF (62 aa)) form an essential for cytoplasmic localization region. CMP/dCMP-type deaminase domains follow at residues 29–143 (HRNT…SQTG) and 211–325 (GQHQ…LRRL). Thr32 carries the post-translational modification Phosphothreonine; by PKA. Residues His67, Cys98, and Cys101 each coordinate Zn(2+). The segment at 206–333 (DPSVLGQHQS…RLDRAGTPIS (128 aa)) is necessary for homooligomerization. The interaction with DNA stretch occupies residues 210–212 (LGQ). Position 254 (His254) interacts with Zn(2+). Glu256 functions as the Proton donor in the catalytic mechanism. Cys285 and Cys288 together coordinate Zn(2+). An interaction with DNA region spans residues 310–317 (RIYDYQRG).

Belongs to the cytidine and deoxycytidylate deaminase family. Homodimer. Homooligomer. Can bind RNA to form ribonucleoprotein complexes of high-molecular-mass (HMM) or low-molecular-mass (LMM). HMM is inactive and heterogeneous in protein composition because of binding nonselectively to cellular RNAs, which in turn are associated with variety of cellular proteins. The LMM form which is enzymatically active has few or no RNAs associated. Its ability to form homooligomer is distinct from its ability to assemble into HMM. Interacts with APOBEC3B, APOBEC3F, MOV10, AGO2, EIF4E, EIF4ENIF1, DCP2 and DDX6 in an RNA-dependent manner. Interacts with AGO1, AGO3 and PKA/PRKACA. It depends on Zn(2+) as a cofactor.

Its subcellular location is the cytoplasm. The protein resides in the nucleus. It localises to the P-body. It carries out the reaction a 2'-deoxycytidine in single-stranded DNA + H2O + H(+) = a 2'-deoxyuridine in single-stranded DNA + NH4(+). DNA deaminase (cytidine deaminase) which acts as an inhibitor of retrovirus replication and retrotransposon mobility. After the penetration of retroviral nucleocapsids into target cells of infection and the initiation of reverse transcription, it can induce the conversion of cytosine to uracil in the minus-sense single-strand viral DNA, leading to G-to-A hypermutations in the subsequent plus-strand viral DNA. The resultant detrimental levels of mutations in the proviral genome, along with a deamination-independent mechanism that works prior to the proviral integration, together exert efficient antiretroviral effects in infected target cells. Selectively targets single-stranded DNA and does not deaminate double-stranded DNA or single- or double-stranded RNA. This chain is DNA dC-&gt;dU-editing enzyme APOBEC-3G (APOBEC3G), found in Lagothrix lagotricha (Brown woolly monkey).